Here is a 220-residue protein sequence, read N- to C-terminus: GTP-binding nuclear protein GSP2/CNR2 (220 aa).

Ser-2 carries the post-translational modification N-acetylserine. Residue Ser-2 is modified to Phosphoserine. The Small GTPase Ran-type domain occupies 10-174 (EVPTFKLVLV…LWLARKLAGN (165 aa)). Position 21–28 (21–28 (DGGTGKTT)) interacts with GTP. The switch-I stretch occupies residues 40 to 48 (KKYIATIGV). Residues Gly-71, 125–128 (NKVD), and 153–155 (SAK) contribute to the GTP site. Residues 71–87 (GQEKFGGLRDGYYINAQ) are switch-II.

This sequence belongs to the small GTPase superfamily. Ran family. As to quaternary structure, found in a nuclear export complex with RanGTP, exportin and pre-miRNA.

It is found in the nucleus. Its function is as follows. GTP-binding protein involved in nucleocytoplasmic transport. Required for the import of protein into the nucleus and also for RNA export. Not essential for cell viability. This Saccharomyces cerevisiae (strain ATCC 204508 / S288c) (Baker's yeast) protein is GTP-binding nuclear protein GSP2/CNR2 (GSP2).